Here is a 168-residue protein sequence, read N- to C-terminus: Mediator of RNA polymerase II transcription subunit 11 (168 aa).

The disordered stretch occupies residues 126–168 (ETLENESNNEIQPKTESDTNQVETNENGNDINNKESEDIEMKE). The span at 130-156 (NESNNEIQPKTESDTNQVETNENGNDI) shows a compositional bias: polar residues. Residues 157 to 168 (NNKESEDIEMKE) are compositionally biased toward basic and acidic residues.

Belongs to the Mediator complex subunit 11 family. In terms of assembly, component of the Mediator complex.

It localises to the nucleus. In terms of biological role, component of the Mediator complex, a coactivator involved in the regulated transcription of nearly all RNA polymerase II-dependent genes. Mediator functions as a bridge to convey information from gene-specific regulatory proteins to the basal RNA polymerase II transcription machinery. Mediator is recruited to promoters by direct interactions with regulatory proteins and serves as a scaffold for the assembly of a functional pre-initiation complex with RNA polymerase II and the general transcription factors. In Candida albicans (strain SC5314 / ATCC MYA-2876) (Yeast), this protein is Mediator of RNA polymerase II transcription subunit 11 (MED11).